The primary structure comprises 322 residues: Phosphatidylserine decarboxylase proenzyme (322 aa).

Residues aspartate 90, histidine 147, and serine 254 each act as charge relay system; for autoendoproteolytic cleavage activity in the active site. Serine 254 (schiff-base intermediate with substrate; via pyruvic acid; for decarboxylase activity) is an active-site residue. Serine 254 carries the post-translational modification Pyruvic acid (Ser); by autocatalysis. Residues 296-322 (EPAPLPAEEIKAEHDASPLVDNKKDDT) form a disordered region. Basic and acidic residues predominate over residues 303-322 (EEIKAEHDASPLVDNKKDDT).

This sequence belongs to the phosphatidylserine decarboxylase family. PSD-B subfamily. Prokaryotic type I sub-subfamily. In terms of assembly, heterodimer of a large membrane-associated beta subunit and a small pyruvoyl-containing alpha subunit. Pyruvate is required as a cofactor. Is synthesized initially as an inactive proenzyme. Formation of the active enzyme involves a self-maturation process in which the active site pyruvoyl group is generated from an internal serine residue via an autocatalytic post-translational modification. Two non-identical subunits are generated from the proenzyme in this reaction, and the pyruvate is formed at the N-terminus of the alpha chain, which is derived from the carboxyl end of the proenzyme. The autoendoproteolytic cleavage occurs by a canonical serine protease mechanism, in which the side chain hydroxyl group of the serine supplies its oxygen atom to form the C-terminus of the beta chain, while the remainder of the serine residue undergoes an oxidative deamination to produce ammonia and the pyruvoyl prosthetic group on the alpha chain. During this reaction, the Ser that is part of the protease active site of the proenzyme becomes the pyruvoyl prosthetic group, which constitutes an essential element of the active site of the mature decarboxylase.

The protein resides in the cell membrane. The catalysed reaction is a 1,2-diacyl-sn-glycero-3-phospho-L-serine + H(+) = a 1,2-diacyl-sn-glycero-3-phosphoethanolamine + CO2. Its pathway is phospholipid metabolism; phosphatidylethanolamine biosynthesis; phosphatidylethanolamine from CDP-diacylglycerol: step 2/2. Its function is as follows. Catalyzes the formation of phosphatidylethanolamine (PtdEtn) from phosphatidylserine (PtdSer). The sequence is that of Phosphatidylserine decarboxylase proenzyme from Salmonella dublin (strain CT_02021853).